The following is a 153-amino-acid chain: Aspartate carbamoyltransferase regulatory chain (153 aa).

Zn(2+) is bound by residues Cys109, Cys114, Cys138, and Cys141.

It belongs to the PyrI family. Contains catalytic and regulatory chains. Zn(2+) serves as cofactor.

Involved in allosteric regulation of aspartate carbamoyltransferase. This chain is Aspartate carbamoyltransferase regulatory chain, found in Escherichia coli (strain ATCC 8739 / DSM 1576 / NBRC 3972 / NCIMB 8545 / WDCM 00012 / Crooks).